Reading from the N-terminus, the 240-residue chain is Adenosylcobinamide-GDP ribazoletransferase (240 aa).

Transmembrane regions (helical) follow at residues 31 to 51 (LLYYPLVGLLFGLLLWLASHL), 62 to 81 (ALLLTLWVLLSGALHLDGLA), 109 to 129 (IAVVTLVLVLLLKFCALWVLV), 133 to 153 (IGAQLLLAPLIGRAAMLGLFL), and 179 to 199 (VLLVCVLFCLFLGGWSVLLAL).

It belongs to the CobS family. Requires Mg(2+) as cofactor.

The protein resides in the cell inner membrane. The enzyme catalyses alpha-ribazole + adenosylcob(III)inamide-GDP = adenosylcob(III)alamin + GMP + H(+). The catalysed reaction is alpha-ribazole 5'-phosphate + adenosylcob(III)inamide-GDP = adenosylcob(III)alamin 5'-phosphate + GMP + H(+). It participates in cofactor biosynthesis; adenosylcobalamin biosynthesis; adenosylcobalamin from cob(II)yrinate a,c-diamide: step 7/7. In terms of biological role, joins adenosylcobinamide-GDP and alpha-ribazole to generate adenosylcobalamin (Ado-cobalamin). Also synthesizes adenosylcobalamin 5'-phosphate from adenosylcobinamide-GDP and alpha-ribazole 5'-phosphate. The sequence is that of Adenosylcobinamide-GDP ribazoletransferase from Pseudomonas putida (strain ATCC 47054 / DSM 6125 / CFBP 8728 / NCIMB 11950 / KT2440).